The primary structure comprises 2542 residues: Unconventional myosin-IXa (2542 aa).

The Ras-associating domain occupies 14-112 (NEHTLRIYPG…YRFLLREKNL (99 aa)). One can recognise a Myosin motor domain in the interval 146 to 1017 (KDFDDLCSLP…ERQHLQDLLH (872 aa)). A helical membrane pass occupies residues 175–195 (IYTYVGSILIAINPFKFLPIY). Position 239–246 (239–246 (GESGSGKT)) interacts with ATP. S755 carries the post-translational modification Phosphoserine. The actin-binding stretch occupies residues 908-919 (QAEPYFVKCIRS). IQ domains lie at 1021-1041 (LRRI…QQFL), 1043-1072 (LRQA…EKDA), 1075-1104 (MASA…AAVI), 1116-1145 (RHKA…KIIL), and 1139-1168 (QRNK…EKLR). Residues 1022-1163 (RRIVLLQRWF…RARQRCNALK (142 aa)) form a neck or regulatory domain region. Positions 1164–2505 (EEKLREAKLE…LKNVKNSPQK (1342 aa)) are tail. The span at 1221–1240 (RESSMDFSKESPDKQQERGR) shows a compositional bias: basic and acidic residues. A disordered region spans residues 1221-1276 (RESSMDFSKESPDKQQERGRRQSGTDLQEDVIVRQRPKSLEDLHQKKVGRAKRESR). S1243 carries the phosphoserine modification. The residue at position 1245 (T1245) is a Phosphothreonine. The residue at position 1259 (S1259) is a Phosphoserine. A coiled-coil region spans residues 1265–1292 (QKKVGRAKRESRRMRELEQAIFSLELLK). A compositionally biased stretch (basic residues) spans 1266 to 1276 (KKVGRAKRESR). S1300 and S1318 each carry phosphoserine. Positions 1342-1401 (KSKPESLILDEGELKISSPNTFTNPKSQDNALSASSETSSTLAGKGASSDSEHLKNGTAK) are disordered. A compositionally biased stretch (polar residues) spans 1358-1371 (SSPNTFTNPKSQDN). The span at 1372–1384 (ALSASSETSSTLA) shows a compositional bias: low complexity. Basic and acidic residues predominate over residues 1391–1401 (DSEHLKNGTAK). Residues 1492 to 1539 (TVLKKLEKLNIEKEKRQKQLQQQNEKEMMEQIRQQTDILEKERKAFKT) are a coiled coil. 4 disordered regions span residues 1650 to 1675 (RSTE…REGS), 1693 to 1727 (SGNP…SVDE), 1767 to 1793 (GKQG…PGPD), and 1806 to 1841 (QYHP…KRGV). The segment covering 1665 to 1675 (HRSDDPSREGS) has biased composition (basic and acidic residues). Over residues 1715–1726 (QQETSQRFSSVD) the composition is skewed to polar residues. A compositionally biased stretch (basic and acidic residues) spans 1821-1833 (CRKEFKENKEPSP). Phosphoserine is present on S1950. Phorbol-ester/DAG-type zinc fingers lie at residues 2001-2050 (GHIF…TAKC) and 2068-2119 (SRLT…DTDA). Residues 2065 to 2253 (VELSRLTSED…LIVVEQMNKY (189 aa)) form the Rho-GAP domain. A phosphoserine mark is found at S2293 and S2296. Residues 2324-2360 (TDQQQAAMQQEEKVLTEQIENLQKEKEELTFEMLVLE) adopt a coiled-coil conformation. The disordered stretch occupies residues 2361-2443 (PRASDDETLE…NTTSSHGTRK (83 aa)). Residues 2377 to 2386 (TADSSENLNM) show a composition bias toward polar residues. A compositionally biased stretch (low complexity) spans 2420-2438 (SLDSVSSSVSSCLSNTTSS). S2458 is modified (phosphoserine). Positions 2465-2530 (TEGPLGQAKS…TVDSDCSSTQ (66 aa)) are disordered.

It belongs to the TRAFAC class myosin-kinesin ATPase superfamily. Myosin family. Phosphorylated by ALPK1 following monosodium urate monohydrate (MSU)-induced inflammation. Expressed in the eye, lung, liver, brain, heart, kidney, skeletal muscle and spleen. No detection was found in liver. In the brain, expressed in the ependymal cells of the third ventricle and the aqueduct.

It localises to the membrane. It is found in the cytoplasm. The protein localises to the synapse. The protein resides in the cell projection. Its subcellular location is the growth cone. Functionally, myosins are actin-based motor molecules with ATPase activity. Unconventional myosins serve in intracellular movements. Regulates Rho by stimulating it's GTPase activity in neurons. Required for the regulation of neurite branching and motor neuron axon guidance. In Mus musculus (Mouse), this protein is Unconventional myosin-IXa (Myo9a).